The primary structure comprises 337 residues: Glyceraldehyde-3-phosphate dehydrogenase 2 (337 aa).

NADP(+)-binding positions include 11–12 (RI), Asp-35, Arg-80, and Thr-122. Residues 153-155 (SCT), Thr-184, Arg-199, 212-213 (TG), and Arg-235 each bind D-glyceraldehyde 3-phosphate. The Nucleophile role is filled by Cys-154. Asn-317 contacts NADP(+).

It belongs to the glyceraldehyde-3-phosphate dehydrogenase family. Homotetramer.

Its subcellular location is the cytoplasm. It carries out the reaction D-glyceraldehyde 3-phosphate + phosphate + NADP(+) = (2R)-3-phospho-glyceroyl phosphate + NADPH + H(+). The enzyme catalyses D-glyceraldehyde 3-phosphate + phosphate + NAD(+) = (2R)-3-phospho-glyceroyl phosphate + NADH + H(+). The protein operates within carbohydrate biosynthesis; Calvin cycle. Its function is as follows. Gap2 has a major role in carbon fixation as a component of the Calvin cycle. Catalyzes the oxidative phosphorylation of glyceraldehyde 3-phosphate (G3P) to 1,3-bisphosphoglycerate (BPG) using the cofactor NAD. The first reaction step involves the formation of a hemiacetal intermediate between G3P and a cysteine residue, and this hemiacetal intermediate is then oxidized to a thioester, with concomitant reduction of NAD to NADH. The reduced NADH is then exchanged with the second NAD, and the thioester is attacked by a nucleophilic inorganic phosphate to produce BPG. This chain is Glyceraldehyde-3-phosphate dehydrogenase 2 (gap2), found in Trichormus variabilis (strain ATCC 29413 / PCC 7937) (Anabaena variabilis).